The primary structure comprises 508 residues: Photosystem II CP47 reaction center protein (508 aa).

6 consecutive transmembrane segments (helical) span residues 21-36 (SVHI…WAGS), 101-115 (IVFS…IWHW), 140-156 (GIHL…FGAF), 203-218 (IAAG…FHLS), 237-252 (VLSS…AFVV), and 457-472 (SFAL…HGAR).

The protein belongs to the PsbB/PsbC family. PsbB subfamily. PSII is composed of 1 copy each of membrane proteins PsbA, PsbB, PsbC, PsbD, PsbE, PsbF, PsbH, PsbI, PsbJ, PsbK, PsbL, PsbM, PsbT, PsbX, PsbY, PsbZ, Psb30/Ycf12, at least 3 peripheral proteins of the oxygen-evolving complex and a large number of cofactors. It forms dimeric complexes. It depends on Binds multiple chlorophylls. PSII binds additional chlorophylls, carotenoids and specific lipids. as a cofactor.

Its subcellular location is the plastid. It is found in the chloroplast thylakoid membrane. One of the components of the core complex of photosystem II (PSII). It binds chlorophyll and helps catalyze the primary light-induced photochemical processes of PSII. PSII is a light-driven water:plastoquinone oxidoreductase, using light energy to abstract electrons from H(2)O, generating O(2) and a proton gradient subsequently used for ATP formation. The sequence is that of Photosystem II CP47 reaction center protein from Aethionema cordifolium (Lebanon stonecress).